The sequence spans 167 residues: Probable membrane-bound hydrogenase subunit mbhJ (167 aa).

Residues Cys35, Cys38, Cys102, and Cys132 each contribute to the [4Fe-4S] cluster site.

It belongs to the complex I 20 kDa subunit family. In terms of assembly, the membrane-bound hydrogenase complex is composed of MbhK and MbhL, but may also contain MbhJ. [4Fe-4S] cluster serves as cofactor.

It is found in the cell membrane. It catalyses the reaction H2 + 2 oxidized [2Fe-2S]-[ferredoxin] = 2 reduced [2Fe-2S]-[ferredoxin] + 2 H(+). Its activity is regulated as follows. Inhibited by 0.1 mM Cu(2+). Functionally, probable subunit of a hydrogen-evolving hydrogenase that utilizes protons both as a substrate for hydrogen production and proton translocation. Acts by coupling the redox reaction via ferredoxin and iron-sulfur (Fe-S) clusters to proton translocation across the membrane, thereby conserving the redox energy in a proton gradient. The polypeptide is Probable membrane-bound hydrogenase subunit mbhJ (Pyrococcus furiosus (strain ATCC 43587 / DSM 3638 / JCM 8422 / Vc1)).